The chain runs to 577 residues: Protein hinderin (577 aa).

Ser21 bears the Phosphoserine mark. Residues 91–167 (LKDLCLEDKR…CQELLSLYQK (77 aa)) adopt a coiled-coil conformation. Ser179 carries the post-translational modification Phosphoserine. A disordered region spans residues 251 to 282 (TLHHPKDDLDKIPSETTTCNCESPGRKPAVPT). Residues 254-263 (HPKDDLDKIP) show a composition bias toward basic and acidic residues. Residues 358-402 (LKKQISEDRKQQLMLQKMELEIEKERLQHLLAQQETKLLLKQQQL) adopt a coiled-coil conformation. 3 disordered regions span residues 425 to 444 (SSSI…RKER), 449 to 492 (FHSH…GSLK), and 520 to 540 (LSPN…GAWN). A compositionally biased stretch (basic and acidic residues) spans 449–468 (FHSHMKDDAQWSCQKKDTCR). Phosphoserine occurs at positions 490 and 521.

Interacts (via N- and C-terminal domains) with SMC3 (via central hinge region). As to expression, widely expressed.

Competes with SMC1 for binding to SMC3. May affect the availability of SMC3 to engage in the formation of multimeric protein complexes. The chain is Protein hinderin (KIAA1328) from Homo sapiens (Human).